A 311-amino-acid polypeptide reads, in one-letter code: Solute carrier family 25 member 48 (311 aa).

Solcar repeat units lie at residues S3–F86, R101–W205, and P214–A301. 6 helical membrane passes run F9–V29, G61–S81, L107–I127, V189–E209, C217–M237, and I277–Y295.

This sequence belongs to the mitochondrial carrier (TC 2.A.29) family.

It localises to the mitochondrion inner membrane. In Homo sapiens (Human), this protein is Solute carrier family 25 member 48 (SLC25A48).